A 310-amino-acid chain; its full sequence is Porphobilinogen deaminase (310 aa).

Residue C243 is modified to S-(dipyrrolylmethanemethyl)cysteine.

This sequence belongs to the HMBS family. In terms of assembly, monomer. Dipyrromethane serves as cofactor.

It carries out the reaction 4 porphobilinogen + H2O = hydroxymethylbilane + 4 NH4(+). Its pathway is porphyrin-containing compound metabolism; protoporphyrin-IX biosynthesis; coproporphyrinogen-III from 5-aminolevulinate: step 2/4. Tetrapolymerization of the monopyrrole PBG into the hydroxymethylbilane pre-uroporphyrinogen in several discrete steps. This chain is Porphobilinogen deaminase, found in Methylobacillus flagellatus (strain ATCC 51484 / DSM 6875 / VKM B-1610 / KT).